The primary structure comprises 417 residues: Aromatic-amino-acid aminotransferase 1 (417 aa).

The residue at position 258 (Lys-258) is an N6-(pyridoxal phosphate)lysine.

Belongs to the class-I pyridoxal-phosphate-dependent aminotransferase family. Homodimer. Requires pyridoxal 5'-phosphate as cofactor.

It catalyses the reaction an aromatic L-alpha-amino acid + 2-oxoglutarate = an aromatic oxo-acid + L-glutamate. Functionally, catalyzes the transamination of phenylalanine, tyrosine and tryptophan. Shows virtually no activity towards aspartic acid, alanine, valine or isoleucine. The chain is Aromatic-amino-acid aminotransferase 1 from Thermococcus litoralis (strain ATCC 51850 / DSM 5473 / JCM 8560 / NS-C).